Consider the following 285-residue polypeptide: Acetylglutamate kinase (285 aa).

Residues 55-56 (GG), arginine 77, and asparagine 171 contribute to the substrate site.

Belongs to the acetylglutamate kinase family. ArgB subfamily.

It localises to the cytoplasm. The enzyme catalyses N-acetyl-L-glutamate + ATP = N-acetyl-L-glutamyl 5-phosphate + ADP. The protein operates within amino-acid biosynthesis; L-arginine biosynthesis; N(2)-acetyl-L-ornithine from L-glutamate: step 2/4. In terms of biological role, catalyzes the ATP-dependent phosphorylation of N-acetyl-L-glutamate. The protein is Acetylglutamate kinase of Chlorobaculum tepidum (strain ATCC 49652 / DSM 12025 / NBRC 103806 / TLS) (Chlorobium tepidum).